Reading from the N-terminus, the 185-residue chain is Ribosome-recycling factor (185 aa).

It belongs to the RRF family.

It is found in the cytoplasm. Its function is as follows. Responsible for the release of ribosomes from messenger RNA at the termination of protein biosynthesis. May increase the efficiency of translation by recycling ribosomes from one round of translation to another. This chain is Ribosome-recycling factor, found in Chromohalobacter salexigens (strain ATCC BAA-138 / DSM 3043 / CIP 106854 / NCIMB 13768 / 1H11).